The primary structure comprises 350 residues: Protein RecA (350 aa).

67–74 (GPESSGKT) is a binding site for ATP.

Belongs to the RecA family.

It is found in the cytoplasm. Its function is as follows. Can catalyze the hydrolysis of ATP in the presence of single-stranded DNA, the ATP-dependent uptake of single-stranded DNA by duplex DNA, and the ATP-dependent hybridization of homologous single-stranded DNAs. It interacts with LexA causing its activation and leading to its autocatalytic cleavage. This Chlamydia felis (strain Fe/C-56) (Chlamydophila felis) protein is Protein RecA.